We begin with the raw amino-acid sequence, 340 residues long: MDLRFLASLTLLLGLFFVNTNPTGGQVGVCYGRNGNNLPSPAETIALFKQKNIQRVRLYSPDHDVLAALRGSNIEVTLGLPNSYLQSVASSQSQANAWVQTYVMNYANGVRFRYISVGNEVKISDSYAQFLVPAMENIDRAVLAAGLGGRIKVSTSVDMGVLRESYPPSKGSFRGDVMVVMEPIIRFLVSKNSPLLLNLYTYFSYAGNVGQIRLDYALFTAPSGIVSDPPRSYQNLFDAMLDAMYSALEKSGGASLEIVVAETGWPTGGGTDTNIENARIYNNNLIKHVKNGTPKRPGKEIETYLFAIYDENQKPTPPYVEKFWGLFYPNKQPKYDINFY.

The N-terminal stretch at 1–25 (MDLRFLASLTLLLGLFFVNTNPTGG) is a signal peptide. The active-site Proton donor is the Glu-120. The active-site Nucleophile is Glu-262.

The protein belongs to the glycosyl hydrolase 17 family.

It localises to the secreted. The catalysed reaction is Hydrolysis of (1-&gt;3)-beta-D-glucosidic linkages in (1-&gt;3)-beta-D-glucans.. May play a role in plant defense against pathogens. The sequence is that of Probable glucan endo-1,3-beta-glucosidase BG1 from Arabidopsis thaliana (Mouse-ear cress).